The primary structure comprises 143 residues: MSLSDKDKSAVKALWSKINKSADVIGNDAVSRMIVVYPQTKTYFAHWPDLTPGSTHIKAHGKKVMGGIALAVSKIDDLKAGLSNLSEQHAFKLRVDPANFKILNHCIMVVISSMFPKDFTPEAHVSLDKFLSAVALALAEKYR.

Ser2 carries the post-translational modification N-acetylserine. The Globin domain occupies 2 to 143; that stretch reads SLSDKDKSAV…VALALAEKYR (142 aa). His60 serves as a coordination point for O2. His89 serves as a coordination point for heme b.

This sequence belongs to the globin family. As to quaternary structure, heterotetramer of two alpha chains and two beta chains. In terms of tissue distribution, red blood cells.

Involved in oxygen transport from gills to the various peripheral tissues. The sequence is that of Hemoglobin subunit alpha (hba) from Pogonophryne scotti (Saddleback plunderfish).